Consider the following 482-residue polypeptide: Carbamoyl phosphate synthase large chain, N-terminal section (482 aa).

Positions methionine 1–aspartate 398 are carboxyphosphate synthetic domain. Residues arginine 126, arginine 166, glycine 172, glycine 173, glutamate 205, valine 207, glutamate 212, glycine 238, isoleucine 239, histidine 240, glutamine 281, and glutamate 295 each contribute to the ATP site. In terms of domain architecture, ATP-grasp spans alanine 130 to isoleucine 324. Residues glutamine 281, glutamate 295, and asparagine 297 each contribute to the Mg(2+) site. Residues glutamine 281, glutamate 295, and asparagine 297 each contribute to the Mn(2+) site.

The protein belongs to the CarB family. As to quaternary structure, composed of two chains; the small (or glutamine) chain promotes the hydrolysis of glutamine to ammonia, which is used by the large (or ammonia) chain to synthesize carbamoyl phosphate. Tetramer of heterodimers (alpha,beta)4. Mg(2+) serves as cofactor. It depends on Mn(2+) as a cofactor.

It catalyses the reaction hydrogencarbonate + L-glutamine + 2 ATP + H2O = carbamoyl phosphate + L-glutamate + 2 ADP + phosphate + 2 H(+). It carries out the reaction hydrogencarbonate + NH4(+) + 2 ATP = carbamoyl phosphate + 2 ADP + phosphate + 2 H(+). Its pathway is amino-acid biosynthesis; L-arginine biosynthesis; carbamoyl phosphate from bicarbonate: step 1/1. The protein operates within pyrimidine metabolism; UMP biosynthesis via de novo pathway; (S)-dihydroorotate from bicarbonate: step 1/3. In terms of biological role, large subunit of the glutamine-dependent carbamoyl phosphate synthetase (CPSase). CPSase catalyzes the formation of carbamoyl phosphate from the ammonia moiety of glutamine, carbonate, and phosphate donated by ATP, constituting the first step of 2 biosynthetic pathways, one leading to arginine and/or urea and the other to pyrimidine nucleotides. The large subunit (synthetase) binds the substrates ammonia (free or transferred from glutamine from the small subunit), hydrogencarbonate and ATP and carries out an ATP-coupled ligase reaction, activating hydrogencarbonate by forming carboxy phosphate which reacts with ammonia to form carbamoyl phosphate. The polypeptide is Carbamoyl phosphate synthase large chain, N-terminal section (carB1) (Methanocaldococcus jannaschii (strain ATCC 43067 / DSM 2661 / JAL-1 / JCM 10045 / NBRC 100440) (Methanococcus jannaschii)).